Here is a 578-residue protein sequence, read N- to C-terminus: Proline--tRNA ligase (578 aa).

This sequence belongs to the class-II aminoacyl-tRNA synthetase family. ProS type 1 subfamily. In terms of assembly, homodimer.

It is found in the cytoplasm. The enzyme catalyses tRNA(Pro) + L-proline + ATP = L-prolyl-tRNA(Pro) + AMP + diphosphate. Functionally, catalyzes the attachment of proline to tRNA(Pro) in a two-step reaction: proline is first activated by ATP to form Pro-AMP and then transferred to the acceptor end of tRNA(Pro). As ProRS can inadvertently accommodate and process non-cognate amino acids such as alanine and cysteine, to avoid such errors it has two additional distinct editing activities against alanine. One activity is designated as 'pretransfer' editing and involves the tRNA(Pro)-independent hydrolysis of activated Ala-AMP. The other activity is designated 'posttransfer' editing and involves deacylation of mischarged Ala-tRNA(Pro). The misacylated Cys-tRNA(Pro) is not edited by ProRS. This is Proline--tRNA ligase from Burkholderia vietnamiensis (strain G4 / LMG 22486) (Burkholderia cepacia (strain R1808)).